Reading from the N-terminus, the 674-residue chain is tRNA 5-methylaminomethyl-2-thiouridine biosynthesis bifunctional protein MnmC (674 aa).

The segment at 1 to 246 (MFIMSSISHA…KREMIAGSLS (246 aa)) is tRNA (mnm(5)s(2)U34)-methyltransferase. The segment at 272–674 (IGGGIASATL…RKGKALTQKV (403 aa)) is FAD-dependent cmnm(5)s(2)U34 oxidoreductase.

It in the N-terminal section; belongs to the methyltransferase superfamily. tRNA (mnm(5)s(2)U34)-methyltransferase family. This sequence in the C-terminal section; belongs to the DAO family. FAD serves as cofactor.

The protein localises to the cytoplasm. The enzyme catalyses 5-aminomethyl-2-thiouridine(34) in tRNA + S-adenosyl-L-methionine = 5-methylaminomethyl-2-thiouridine(34) in tRNA + S-adenosyl-L-homocysteine + H(+). Its function is as follows. Catalyzes the last two steps in the biosynthesis of 5-methylaminomethyl-2-thiouridine (mnm(5)s(2)U) at the wobble position (U34) in tRNA. Catalyzes the FAD-dependent demodification of cmnm(5)s(2)U34 to nm(5)s(2)U34, followed by the transfer of a methyl group from S-adenosyl-L-methionine to nm(5)s(2)U34, to form mnm(5)s(2)U34. In Vibrio cholerae serotype O1 (strain ATCC 39315 / El Tor Inaba N16961), this protein is tRNA 5-methylaminomethyl-2-thiouridine biosynthesis bifunctional protein MnmC.